We begin with the raw amino-acid sequence, 461 residues long: Argininosuccinate lyase (461 aa).

Belongs to the lyase 1 family. Argininosuccinate lyase subfamily.

Its subcellular location is the cytoplasm. It catalyses the reaction 2-(N(omega)-L-arginino)succinate = fumarate + L-arginine. It participates in amino-acid biosynthesis; L-arginine biosynthesis; L-arginine from L-ornithine and carbamoyl phosphate: step 3/3. The protein is Argininosuccinate lyase of Desulfitobacterium hafniense (strain DSM 10664 / DCB-2).